Consider the following 310-residue polypeptide: Protein FIP2 (310 aa).

The interval 1 to 58 (MGFAPVTPAAVETYDPDVDHDDESNGLDGFRVRSKRSGKFSGGYSDSPREVGDGYGVR) is disordered. A compositionally biased stretch (acidic residues) spans 14 to 25 (YDPDVDHDDESN). Phosphoserine occurs at positions 77 and 105. Disordered regions lie at residues 115-135 (ATRLRTHGKPSSGDFSHGSGG), 152-171 (FKPKNFSKPEPNFSQDLDYD), and 177-221 (DRAE…GSSS). Positions 208–221 (PRNTGASNGYGSSS) are enriched in polar residues.

Interacts with FRI. Interacts with WAV3.

This Arabidopsis thaliana (Mouse-ear cress) protein is Protein FIP2.